Reading from the N-terminus, the 256-residue chain is Thrombin-like enzyme cerastocytin (256 aa).

The N-terminal stretch at 1–18 (MVLISVLASLLVLQLSYA) is a signal peptide. Residues 19–24 (QKSSEL) constitute a propeptide that is removed on maturation. The Peptidase S1 domain occupies 25–247 (VIGGAECNIN…YTDWIRNIIA (223 aa)). Intrachain disulfides connect Cys31-Cys161, Cys98-Cys254, Cys140-Cys208, Cys172-Cys187, and Cys198-Cys223. An N-linked (GlcNAc...) asparagine glycan is attached at Asn44. Catalysis depends on charge relay system residues His65 and Asp108. 3 N-linked (GlcNAc...) asparagine glycosylation sites follow: Asn119, Asn120, and Asn152. Residue Ser202 is the Charge relay system of the active site.

It belongs to the peptidase S1 family. Snake venom subfamily. As to quaternary structure, monomer. As to expression, expressed by the venom gland.

It is found in the secreted. With respect to regulation, its platelets aggregating activity is inhibited by chlorpromazine, theophylline mepacrine. Its platelet aggregating activity and its amidolytic activity are inhibited by PMSF, TPCK, TLCK and soybean trypsin inhibitors. Is unaffected by hirudin or by antithrombin-III in the presence of heparin. Its function is as follows. Thrombin-like snake venom serine protease which potently induces platelet aggregation and has fibrinogenolytic activities. Clots purified fibrinogen and hydrolyzes alpha-chains (FGA). High concentrations of this enzyme also cleave prothrombin (F2) and factor X (F10). Is also able to activate factor XIII (F8). The protein is Thrombin-like enzyme cerastocytin of Cerastes cerastes (Horned desert viper).